The sequence spans 247 residues: Protein-L-isoaspartate O-methyltransferase 2 (247 aa).

Ser97 is an active-site residue.

The protein belongs to the methyltransferase superfamily. L-isoaspartyl/D-aspartyl protein methyltransferase family.

The protein resides in the cytoplasm. It carries out the reaction [protein]-L-isoaspartate + S-adenosyl-L-methionine = [protein]-L-isoaspartate alpha-methyl ester + S-adenosyl-L-homocysteine. Catalyzes the methyl esterification of L-isoaspartyl residues in peptides and proteins that result from spontaneous decomposition of normal L-aspartyl and L-asparaginyl residues. It plays a role in the repair and/or degradation of damaged proteins. The polypeptide is Protein-L-isoaspartate O-methyltransferase 2 (Syntrophobacter fumaroxidans (strain DSM 10017 / MPOB)).